The primary structure comprises 340 residues: Peroxisomal adenine nucleotide transporter 1 (340 aa).

3 Solcar repeats span residues 4–119 (ENAV…VRKH), 133–218 (FSTP…LREA), and 236–320 (LSPG…LTKM). 6 helical membrane passes run 6-26 (AVIGATASSLANIAVYPLDLA), 96-116 (GSSTVAGFIQSFSYFFWYTLV), 139-159 (LVLGIVAAATSQLFVNPINVV), 190-210 (GFWAGLKVSLVLTVNPSITYA), 242-262 (FVMGVLSKIVSTVLTQPLIIA), and 293-313 (WKGLGPQITKGVLVQGLLFMF).

It belongs to the mitochondrial carrier (TC 2.A.29) family.

The protein localises to the peroxisome membrane. Functionally, adenine nucleotide transporter involved in the uniport of ATP and adenine nucleotide hetero-exchange transport between the cytosol and the peroxisomal lumen. This transport is accompanied by a proton transport from the peroxisomal lumen to the cytosol. Transport of ATP into the peroxisome is required for beta-oxidation of medium-chain fatty acids. This is Peroxisomal adenine nucleotide transporter 1 (ANT1) from Eremothecium gossypii (strain ATCC 10895 / CBS 109.51 / FGSC 9923 / NRRL Y-1056) (Yeast).